We begin with the raw amino-acid sequence, 470 residues long: Cysteine--tRNA ligase (470 aa).

Cysteine 30 contacts Zn(2+). The 'HIGH' region motif lies at 32-42 (PTVYNYIHIGN). Residues cysteine 211, histidine 236, and glutamate 240 each coordinate Zn(2+). Positions 268–272 (KMSKS) match the 'KMSKS' region motif. Residue lysine 271 participates in ATP binding.

It belongs to the class-I aminoacyl-tRNA synthetase family. Monomer. The cofactor is Zn(2+).

The protein localises to the cytoplasm. It carries out the reaction tRNA(Cys) + L-cysteine + ATP = L-cysteinyl-tRNA(Cys) + AMP + diphosphate. The protein is Cysteine--tRNA ligase of Fervidobacterium nodosum (strain ATCC 35602 / DSM 5306 / Rt17-B1).